A 126-amino-acid polypeptide reads, in one-letter code: Glycine cleavage system H protein (126 aa).

The Lipoyl-binding domain occupies 21-103 (TVTIGISEHA…YEGGWIVKVK (83 aa)). N6-lipoyllysine is present on Lys-62.

It belongs to the GcvH family. As to quaternary structure, the glycine cleavage system is composed of four proteins: P, T, L and H. (R)-lipoate serves as cofactor.

The glycine cleavage system catalyzes the degradation of glycine. The H protein shuttles the methylamine group of glycine from the P protein to the T protein. This is Glycine cleavage system H protein from Vibrio parahaemolyticus serotype O3:K6 (strain RIMD 2210633).